We begin with the raw amino-acid sequence, 211 residues long: Probable endopeptidase cgR_2070 (211 aa).

Positions 1-35 (MGKHRRNNSNATRKAVAASAVALGATAAIASPAQA) are cleaved as a signal peptide. A NlpC/P60 domain is found at 97-211 (ASTGQAIVDA…YMPFHSAVRF (115 aa)). Cys127 serves as the catalytic Nucleophile. The active-site Proton acceptor is His175. His187 is a catalytic residue.

This sequence belongs to the peptidase C40 family.

The protein localises to the secreted. This chain is Probable endopeptidase cgR_2070, found in Corynebacterium glutamicum (strain R).